The chain runs to 555 residues: Glucose-6-phosphate isomerase (555 aa).

The active-site Proton donor is Glu-365. Catalysis depends on residues His-396 and Lys-522.

It belongs to the GPI family.

The protein localises to the cytoplasm. It catalyses the reaction alpha-D-glucose 6-phosphate = beta-D-fructose 6-phosphate. It participates in carbohydrate biosynthesis; gluconeogenesis. Its pathway is carbohydrate degradation; glycolysis; D-glyceraldehyde 3-phosphate and glycerone phosphate from D-glucose: step 2/4. In terms of biological role, catalyzes the reversible isomerization of glucose-6-phosphate to fructose-6-phosphate. This chain is Glucose-6-phosphate isomerase, found in Psychrobacter cryohalolentis (strain ATCC BAA-1226 / DSM 17306 / VKM B-2378 / K5).